An 81-amino-acid chain; its full sequence is Photosystem I iron-sulfur center (81 aa).

2 consecutive 4Fe-4S ferredoxin-type domains span residues 2-31 (SHSV…MVPW) and 39-68 (IASA…VRVY). Cys11, Cys14, Cys17, Cys21, Cys48, Cys51, Cys54, and Cys58 together coordinate [4Fe-4S] cluster.

In terms of assembly, the eukaryotic PSI reaction center is composed of at least 11 subunits. It depends on [4Fe-4S] cluster as a cofactor.

The protein resides in the plastid. It localises to the chloroplast thylakoid membrane. It carries out the reaction reduced [plastocyanin] + hnu + oxidized [2Fe-2S]-[ferredoxin] = oxidized [plastocyanin] + reduced [2Fe-2S]-[ferredoxin]. In terms of biological role, apoprotein for the two 4Fe-4S centers FA and FB of photosystem I (PSI); essential for photochemical activity. FB is the terminal electron acceptor of PSI, donating electrons to ferredoxin. The C-terminus interacts with PsaA/B/D and helps assemble the protein into the PSI complex. Required for binding of PsaD and PsaE to PSI. PSI is a plastocyanin/cytochrome c6-ferredoxin oxidoreductase, converting photonic excitation into a charge separation, which transfers an electron from the donor P700 chlorophyll pair to the spectroscopically characterized acceptors A0, A1, FX, FA and FB in turn. The polypeptide is Photosystem I iron-sulfur center (Nephroselmis olivacea (Green alga)).